Reading from the N-terminus, the 99-residue chain is Large ribosomal subunit protein uL23 (99 aa).

It belongs to the universal ribosomal protein uL23 family. As to quaternary structure, part of the 50S ribosomal subunit. Contacts protein L29, and trigger factor when it is bound to the ribosome.

Its function is as follows. One of the early assembly proteins it binds 23S rRNA. One of the proteins that surrounds the polypeptide exit tunnel on the outside of the ribosome. Forms the main docking site for trigger factor binding to the ribosome. This is Large ribosomal subunit protein uL23 from Pseudomonas savastanoi pv. phaseolicola (strain 1448A / Race 6) (Pseudomonas syringae pv. phaseolicola (strain 1448A / Race 6)).